The primary structure comprises 605 residues: Elongation factor 4 (605 aa).

Residues 11-193 form the tr-type G domain; that stretch reads KNIRNFSIIA…TLVDVIPAPT (183 aa). GTP contacts are provided by residues 23 to 28 and 140 to 143; these read DHGKST and NKID.

It belongs to the TRAFAC class translation factor GTPase superfamily. Classic translation factor GTPase family. LepA subfamily.

Its subcellular location is the cell inner membrane. It catalyses the reaction GTP + H2O = GDP + phosphate + H(+). Its function is as follows. Required for accurate and efficient protein synthesis under certain stress conditions. May act as a fidelity factor of the translation reaction, by catalyzing a one-codon backward translocation of tRNAs on improperly translocated ribosomes. Back-translocation proceeds from a post-translocation (POST) complex to a pre-translocation (PRE) complex, thus giving elongation factor G a second chance to translocate the tRNAs correctly. Binds to ribosomes in a GTP-dependent manner. This chain is Elongation factor 4, found in Acinetobacter baumannii (strain AB307-0294).